A 320-amino-acid chain; its full sequence is Ferrochelatase (320 aa).

Residues histidine 194 and glutamate 275 each coordinate Fe cation.

Belongs to the ferrochelatase family.

It is found in the cytoplasm. It catalyses the reaction heme b + 2 H(+) = protoporphyrin IX + Fe(2+). It functions in the pathway porphyrin-containing compound metabolism; protoheme biosynthesis; protoheme from protoporphyrin-IX: step 1/1. Functionally, catalyzes the ferrous insertion into protoporphyrin IX. The polypeptide is Ferrochelatase (Vibrio cholerae serotype O1 (strain ATCC 39315 / El Tor Inaba N16961)).